The following is a 692-amino-acid chain: Peroxisomal primary amine oxidase (692 aa).

Residues 1 to 22 are compositionally biased toward low complexity; sequence MERLRQIASQATAASAAPARPA. The tract at residues 1–26 is disordered; the sequence is MERLRQIASQATAASAAPARPAHPLD. Asn243 is a glycosylation site (N-linked (GlcNAc...) asparagine). 317-328 is a binding site for substrate; sequence ALDIGEYGAGYM. The Proton acceptor role is filled by Asp319. Residues Cys338 and Cys364 are joined by a disulfide bond. 402–407 is a substrate binding site; sequence AANYEY. Tyr405 functions as the Schiff-base intermediate with substrate; via topaquinone in the catalytic mechanism. Tyr405 is subject to 2',4',5'-topaquinone. The Cu cation site is built by His456 and His458. Mn(2+) contacts are provided by Asp465, Asp613, and Ile614. His624 contacts Cu cation.

Belongs to the copper/topaquinone oxidase family. In terms of assembly, homodimer. The cofactor is Cu cation. Requires Zn(2+) as cofactor. L-topaquinone serves as cofactor. Mn(2+) is required as a cofactor. Topaquinone (TPQ) is generated by copper-dependent autoxidation of a specific tyrosyl residue.

Its subcellular location is the peroxisome. It catalyses the reaction a primary methyl amine + O2 + H2O = an aldehyde + H2O2 + NH4(+). This is Peroxisomal primary amine oxidase (AMO) from Pichia angusta (Yeast).